We begin with the raw amino-acid sequence, 430 residues long: Adenylosuccinate synthetase (430 aa).

GTP contacts are provided by residues 12 to 18 (GDEGKGK) and 40 to 42 (GHT). The Proton acceptor role is filled by Asp13. Residues Asp13 and Gly40 each coordinate Mg(2+). IMP contacts are provided by residues 13 to 16 (DEGK), 38 to 41 (NAGH), Thr130, Arg144, Gln224, Thr239, and Arg303. Catalysis depends on His41, which acts as the Proton donor. 299–305 (TTTGRKR) provides a ligand contact to substrate. GTP contacts are provided by residues Arg305, 331 to 333 (KLD), and 413 to 415 (STS).

It belongs to the adenylosuccinate synthetase family. As to quaternary structure, homodimer. The cofactor is Mg(2+).

It localises to the cytoplasm. It carries out the reaction IMP + L-aspartate + GTP = N(6)-(1,2-dicarboxyethyl)-AMP + GDP + phosphate + 2 H(+). Its pathway is purine metabolism; AMP biosynthesis via de novo pathway; AMP from IMP: step 1/2. Plays an important role in the de novo pathway of purine nucleotide biosynthesis. Catalyzes the first committed step in the biosynthesis of AMP from IMP. This is Adenylosuccinate synthetase from Ruegeria pomeroyi (strain ATCC 700808 / DSM 15171 / DSS-3) (Silicibacter pomeroyi).